A 205-amino-acid polypeptide reads, in one-letter code: uncharacterized protein (205 aa).

The segment at 72 to 114 (ARVSPYGYESDSENEEYTRISSATSSNVLTDSPTTTQDDPTGR) is disordered. Residues 90–100 (RISSATSSNVL) are compositionally biased toward polar residues. Residues 101-110 (TDSPTTTQDD) are compositionally biased toward low complexity.

This is an uncharacterized protein from Equus caballus (Horse).